Consider the following 228-residue polypeptide: Ran-binding protein 1 homolog a (228 aa).

Over residues 1–13 (MATNEPEHEHRDE) the composition is skewed to basic and acidic residues. 2 disordered regions span residues 1–30 (MATNEPEHEHRDEEEAGANEDEDTGAQVAP) and 159–228 (SEEE…GPST). The span at 14-24 (EEAGANEDEDT) shows a compositional bias: acidic residues. One can recognise a RanBD1 domain in the interval 27-162 (QVAPIVRLEE…FKEVAESEEE (136 aa)). The segment covering 179–228 (LTVEETKTEEKTEAKAVETAKTEVKAEEKKESEAEKSGEAKKTEESGPST) has biased composition (basic and acidic residues).

In terms of assembly, interacts with the GTP-bound form of RAN1, RAN2 and RAN3. As to expression, ubiquitous. Preferentially expressed in root tips and gynoecium.

It localises to the nucleus. Its subcellular location is the nuclear pore complex. In Arabidopsis thaliana (Mouse-ear cress), this protein is Ran-binding protein 1 homolog a (RANBP1A).